The following is a 290-amino-acid chain: Membrane protein insertase YidC 2 (290 aa).

The first 19 residues, 1-19, serve as a signal peptide directing secretion; it reads MKKKALLPLFLGIMIFLAG. Residue Cys20 is the site of N-palmitoyl cysteine attachment. A lipid anchor (S-diacylglycerol cysteine) is attached at Cys20. The next 5 membrane-spanning stretches (helical) occupy residues 56 to 76, 134 to 154, 176 to 196, 211 to 231, and 232 to 252; these read FGLA…PFML, MLGC…YFVL, PDIW…VVSS, MVIS…ALGL, and YWSV…IYYS. Positions 266–290 are disordered; that stretch reads YEREHNPSSKKKGKNTQVVSKKNKK. Positions 280–290 are enriched in polar residues; that stretch reads NTQVVSKKNKK.

The protein belongs to the OXA1/ALB3/YidC family. Type 2 subfamily.

Its subcellular location is the cell membrane. Its function is as follows. Required for the insertion and/or proper folding and/or complex formation of integral membrane proteins into the membrane. Involved in integration of membrane proteins that insert both dependently and independently of the Sec translocase complex, as well as at least some lipoproteins. The sequence is that of Membrane protein insertase YidC 2 from Staphylococcus epidermidis (strain ATCC 35984 / DSM 28319 / BCRC 17069 / CCUG 31568 / BM 3577 / RP62A).